The following is a 217-amino-acid chain: Ribonuclease HII (217 aa).

In terms of domain architecture, RNase H type-2 spans 12 to 201; that stretch reads DLVAGVDEVG…VRTAHEARAA (190 aa). 3 residues coordinate a divalent metal cation: D18, E19, and D110.

The protein belongs to the RNase HII family. Requires Mn(2+) as cofactor. Mg(2+) serves as cofactor.

It localises to the cytoplasm. It catalyses the reaction Endonucleolytic cleavage to 5'-phosphomonoester.. Endonuclease that specifically degrades the RNA of RNA-DNA hybrids. The polypeptide is Ribonuclease HII (Pseudomonas syringae pv. tomato (strain ATCC BAA-871 / DC3000)).